The primary structure comprises 387 residues: Beta-carotene 4-ketolase (387 aa).

The segment at 1–78 (MPHSIDMEDS…GNPTVDDASQ (78 aa)) is disordered. Polar residues-rich tracts occupy residues 43 to 53 (NWQTQYHSSEG) and 65 to 78 (DATT…DASQ).

It catalyses the reaction echinenone + 2 AH2 + 2 O2 = canthaxanthin + 2 A + 3 H2O. It carries out the reaction all-trans-beta-carotene + 2 AH2 + 2 O2 = echinenone + 2 A + 3 H2O. Its pathway is carotenoid biosynthesis. Functionally, involved in the biosynthesis of ketocarotenoids which are powerful anti-oxidative molecules. Catalyzes the conversion of beta-carotene to canthaxanthin via echinenone. This is Beta-carotene 4-ketolase from Protosiphon botryoides (Green alga).